The following is a 254-amino-acid chain: Proteasome subunit alpha (254 aa).

Residues 234–254 (EEMLPTPAATEDAPANGDAPS) are disordered.

Belongs to the peptidase T1A family. In terms of assembly, the 20S proteasome core is composed of 14 alpha and 14 beta subunits that assemble into four stacked heptameric rings, resulting in a barrel-shaped structure. The two inner rings, each composed of seven catalytic beta subunits, are sandwiched by two outer rings, each composed of seven alpha subunits. The catalytic chamber with the active sites is on the inside of the barrel. Has a gated structure, the ends of the cylinder being occluded by the N-termini of the alpha-subunits. Is capped by the proteasome-associated ATPase, ARC.

The protein localises to the cytoplasm. It functions in the pathway protein degradation; proteasomal Pup-dependent pathway. The formation of the proteasomal ATPase ARC-20S proteasome complex, likely via the docking of the C-termini of ARC into the intersubunit pockets in the alpha-rings, may trigger opening of the gate for substrate entry. Interconversion between the open-gate and close-gate conformations leads to a dynamic regulation of the 20S proteasome proteolysis activity. Component of the proteasome core, a large protease complex with broad specificity involved in protein degradation. The sequence is that of Proteasome subunit alpha from Rhodococcus erythropolis (strain PR4 / NBRC 100887).